Here is a 229-residue protein sequence, read N- to C-terminus: NAD(P)H-quinone oxidoreductase subunit K, chloroplastic (229 aa).

The [4Fe-4S] cluster site is built by Cys-43, Cys-44, Cys-108, and Cys-139.

It belongs to the complex I 20 kDa subunit family. NDH is composed of at least 16 different subunits, 5 of which are encoded in the nucleus. [4Fe-4S] cluster serves as cofactor.

The protein resides in the plastid. The protein localises to the chloroplast thylakoid membrane. It carries out the reaction a plastoquinone + NADH + (n+1) H(+)(in) = a plastoquinol + NAD(+) + n H(+)(out). It catalyses the reaction a plastoquinone + NADPH + (n+1) H(+)(in) = a plastoquinol + NADP(+) + n H(+)(out). Functionally, NDH shuttles electrons from NAD(P)H:plastoquinone, via FMN and iron-sulfur (Fe-S) centers, to quinones in the photosynthetic chain and possibly in a chloroplast respiratory chain. The immediate electron acceptor for the enzyme in this species is believed to be plastoquinone. Couples the redox reaction to proton translocation, and thus conserves the redox energy in a proton gradient. This Piper cenocladum (Ant piper) protein is NAD(P)H-quinone oxidoreductase subunit K, chloroplastic.